Reading from the N-terminus, the 149-residue chain is Endoribonuclease YbeY (149 aa).

Zn(2+) is bound by residues His101, His105, and His111.

Belongs to the endoribonuclease YbeY family. Requires Zn(2+) as cofactor.

It localises to the cytoplasm. Functionally, single strand-specific metallo-endoribonuclease involved in late-stage 70S ribosome quality control and in maturation of the 3' terminus of the 16S rRNA. This is Endoribonuclease YbeY from Thermotoga neapolitana (strain ATCC 49049 / DSM 4359 / NBRC 107923 / NS-E).